A 509-amino-acid chain; its full sequence is Probable cytochrome P450 519B1 (509 aa).

A helical transmembrane segment spans residues methionine 1–arginine 21. Cysteine 456 is a heme binding site.

Belongs to the cytochrome P450 family. It depends on heme as a cofactor.

The protein resides in the membrane. The sequence is that of Probable cytochrome P450 519B1 (cyp519B1) from Dictyostelium discoideum (Social amoeba).